A 102-amino-acid chain; its full sequence is Large ribosomal subunit protein bL21 (102 aa).

This sequence belongs to the bacterial ribosomal protein bL21 family. Part of the 50S ribosomal subunit. Contacts protein L20.

Functionally, this protein binds to 23S rRNA in the presence of protein L20. This Macrococcus caseolyticus (strain JCSC5402) (Macrococcoides caseolyticum) protein is Large ribosomal subunit protein bL21.